The sequence spans 277 residues: Uridine-cytidine kinase 1 (277 aa).

Residues 1–30 (MASAGGGGSESAAPEADRPQPRPFLIGVSG) are disordered. 30 to 38 (GGTASGKST) provides a ligand contact to ATP. The substrate site is built by Asp-87, Tyr-115, His-120, Arg-169, Arg-178, and Gln-186. Asp-215 lines the ATP pocket. Basic residues predominate over residues 238-250 (RHRGGPNGRNHKR). Positions 238 to 277 (RHRGGPNGRNHKRTFPEPGDHPGVLATGKRSHLESSSRPH) are disordered. At Thr-251 the chain carries Phosphothreonine. Residues 268 to 277 (SHLESSSRPH) show a composition bias toward basic and acidic residues.

The protein belongs to the uridine kinase family.

It catalyses the reaction uridine + ATP = UMP + ADP + H(+). It carries out the reaction cytidine + ATP = CMP + ADP + H(+). Its pathway is pyrimidine metabolism; CTP biosynthesis via salvage pathway; CTP from cytidine: step 1/3. It participates in pyrimidine metabolism; UMP biosynthesis via salvage pathway; UMP from uridine: step 1/1. Functionally, phosphorylates uridine and cytidine to uridine monophosphate and cytidine monophosphate. Does not phosphorylate deoxyribonucleosides or purine ribonucleosides. Can use ATP or GTP as a phosphate donor. This Mus musculus (Mouse) protein is Uridine-cytidine kinase 1 (Uck1).